Consider the following 357-residue polypeptide: DNA replication and repair protein RecF (357 aa).

30–37 (GANGSGKT) is an ATP binding site.

It belongs to the RecF family.

It localises to the cytoplasm. The RecF protein is involved in DNA metabolism; it is required for DNA replication and normal SOS inducibility. RecF binds preferentially to single-stranded, linear DNA. It also seems to bind ATP. The sequence is that of DNA replication and repair protein RecF from Escherichia coli O139:H28 (strain E24377A / ETEC).